Consider the following 310-residue polypeptide: Protoheme IX farnesyltransferase 2 (310 aa).

9 helical membrane passes run 25 to 45 (PGIIFGNLISVAGGFLLAAKG), 49 to 69 (LVLMLASLVGLSLVVASGCAI), 98 to 118 (HVLLFGIALGVLGFGILALFT), 121 to 141 (LALLFAAIGYVVYVGIYSLYM), 145 to 165 (SVYGTLVGSFSGAVPPVVGYC), 176 to 196 (VILLLMFSLWQMPHSYAIAIF), 222 to 242 (IVLYIAVFALVSTMLPLAGYT), 245 to 265 (AFMAVTCATSLWWLTMALKGY), and 277 to 297 (QVFGFSIITITALSVTMALDF).

This sequence belongs to the UbiA prenyltransferase family. Protoheme IX farnesyltransferase subfamily.

The protein resides in the cell inner membrane. The catalysed reaction is heme b + (2E,6E)-farnesyl diphosphate + H2O = Fe(II)-heme o + diphosphate. Its pathway is porphyrin-containing compound metabolism; heme O biosynthesis; heme O from protoheme: step 1/1. In terms of biological role, converts heme B (protoheme IX) to heme O by substitution of the vinyl group on carbon 2 of heme B porphyrin ring with a hydroxyethyl farnesyl side group. This chain is Protoheme IX farnesyltransferase 2, found in Shewanella sp. (strain MR-4).